The primary structure comprises 277 residues: Elongation factor Ts (277 aa).

Residues 81-84 (TDFV) form an involved in Mg(2+) ion dislocation from EF-Tu region.

The protein belongs to the EF-Ts family.

It localises to the cytoplasm. In terms of biological role, associates with the EF-Tu.GDP complex and induces the exchange of GDP to GTP. It remains bound to the aminoacyl-tRNA.EF-Tu.GTP complex up to the GTP hydrolysis stage on the ribosome. The sequence is that of Elongation factor Ts from Amoebophilus asiaticus (strain 5a2).